We begin with the raw amino-acid sequence, 175 residues long: MHSYIDLLNIGASVGGLRWPDMLVQLFFFLILLALLKKFAWGPLMSKMEERENYVANEIESAEQSRAEAEKASKDAAEQLNQVKAEAQKMIEDAKAAGAKQEQAIIDSAREEADRIKEAAQADIQNEKERAIQALQDKVASLSVLIASKVIEKELSEQDQEKLINEYIQEVGEDR.

Residues M22–L44 form a helical membrane-spanning segment.

The protein belongs to the ATPase B chain family. In terms of assembly, F-type ATPases have 2 components, F(1) - the catalytic core - and F(0) - the membrane proton channel. F(1) has five subunits: alpha(3), beta(3), gamma(1), delta(1), epsilon(1). F(0) has three main subunits: a(1), b(2) and c(10-14). The alpha and beta chains form an alternating ring which encloses part of the gamma chain. F(1) is attached to F(0) by a central stalk formed by the gamma and epsilon chains, while a peripheral stalk is formed by the delta and b chains.

The protein resides in the cell membrane. In terms of biological role, f(1)F(0) ATP synthase produces ATP from ADP in the presence of a proton or sodium gradient. F-type ATPases consist of two structural domains, F(1) containing the extramembraneous catalytic core and F(0) containing the membrane proton channel, linked together by a central stalk and a peripheral stalk. During catalysis, ATP synthesis in the catalytic domain of F(1) is coupled via a rotary mechanism of the central stalk subunits to proton translocation. Its function is as follows. Component of the F(0) channel, it forms part of the peripheral stalk, linking F(1) to F(0). The chain is ATP synthase subunit b from Oceanobacillus iheyensis (strain DSM 14371 / CIP 107618 / JCM 11309 / KCTC 3954 / HTE831).